We begin with the raw amino-acid sequence, 307 residues long: MEGVVLLHKPKGMTSHDCVFKLRKILREKRIGHTGTLDPDVTGVLPICVGRATKIAQFLTSETKTYEGEVTLGFSTTTEDASGEVVEKQDVNRTITRKEIEAVLAELTGTLEQVPPMYSAVKVNGKKLYEYARAGQEVKRPVRIITIHEFTLLDNRETFEGANISFRFRVTCSKGTYVRTLAVMIGEKLGFPAHMSDLVRTASGEFQLHDCVSFEEIEENMQNGTVESVFISIDEALSKFPKIVVDEKQAEKIKNGMFLKNEIQAETPFITVFDRNNHCLAIYEHHPKRPGMLKPMKVLVNNQELKL.

Catalysis depends on Asp38, which acts as the Nucleophile.

The protein belongs to the pseudouridine synthase TruB family. Type 1 subfamily.

It carries out the reaction uridine(55) in tRNA = pseudouridine(55) in tRNA. In terms of biological role, responsible for synthesis of pseudouridine from uracil-55 in the psi GC loop of transfer RNAs. The chain is tRNA pseudouridine synthase B from Bacillus cytotoxicus (strain DSM 22905 / CIP 110041 / 391-98 / NVH 391-98).